Consider the following 425-residue polypeptide: Glutamate-1-semialdehyde 2,1-aminomutase (425 aa).

At lysine 264 the chain carries N6-(pyridoxal phosphate)lysine.

The protein belongs to the class-III pyridoxal-phosphate-dependent aminotransferase family. HemL subfamily. Homodimer. Requires pyridoxal 5'-phosphate as cofactor.

The protein localises to the cytoplasm. It carries out the reaction (S)-4-amino-5-oxopentanoate = 5-aminolevulinate. The protein operates within porphyrin-containing compound metabolism; protoporphyrin-IX biosynthesis; 5-aminolevulinate from L-glutamyl-tRNA(Glu): step 2/2. The sequence is that of Glutamate-1-semialdehyde 2,1-aminomutase from Campylobacter lari (strain RM2100 / D67 / ATCC BAA-1060).